An 869-amino-acid chain; its full sequence is DNA mismatch repair protein MutS (869 aa).

Residue 618-625 coordinates ATP; sequence GPNMGGKS.

Belongs to the DNA mismatch repair MutS family.

This protein is involved in the repair of mismatches in DNA. It is possible that it carries out the mismatch recognition step. This protein has a weak ATPase activity. The protein is DNA mismatch repair protein MutS of Zymomonas mobilis subsp. mobilis (strain ATCC 31821 / ZM4 / CP4).